A 111-amino-acid polypeptide reads, in one-letter code: DNA-binding protein AF_2068 (111 aa).

This sequence belongs to the PDCD5 family.

This Archaeoglobus fulgidus (strain ATCC 49558 / DSM 4304 / JCM 9628 / NBRC 100126 / VC-16) protein is DNA-binding protein AF_2068.